The chain runs to 89 residues: Small ribosomal subunit protein uS15 (89 aa).

The protein belongs to the universal ribosomal protein uS15 family. Part of the 30S ribosomal subunit. Forms a bridge to the 50S subunit in the 70S ribosome, contacting the 23S rRNA.

Functionally, one of the primary rRNA binding proteins, it binds directly to 16S rRNA where it helps nucleate assembly of the platform of the 30S subunit by binding and bridging several RNA helices of the 16S rRNA. In terms of biological role, forms an intersubunit bridge (bridge B4) with the 23S rRNA of the 50S subunit in the ribosome. The sequence is that of Small ribosomal subunit protein uS15 from Ligilactobacillus salivarius (strain UCC118) (Lactobacillus salivarius).